We begin with the raw amino-acid sequence, 21 residues long: Maculatin-1.1 (21 aa).

Phenylalanine amide is present on Phe21.

As to expression, expressed by the skin dorsal glands.

It localises to the secreted. In terms of biological role, maculatin-1.1 shows significant antibacterial activity against Gram-positive bacteria, less against Gram-negative bacteria. Maculatin-1.1.1 is inactive. The sequence is that of Maculatin-1.1 from Ranoidea genimaculata (Brown-spotted tree frog).